A 118-amino-acid chain; its full sequence is MGNRAFKAHNGHYLSAEHDHVKTHHGHHDHHTHFHIENHGSKVALRTHCGKYVSIGDHKQVYLSHHLHGDHSLFHLEHHHGKVSIKGHHHHYISVDGHGHVSTSHHHDHHATFEEHIL.

Gly-2 carries the N-myristoyl glycine lipid modification. Residues 8-109 (AHNGHYLSAE…HVSTSHHHDH (102 aa)) form a contains several HHXH repeats region. 2 tandem repeats follow at residues 34-46 (FHIENHGSKVALR) and 74-86 (FHLEHHHGKVSIK). The segment at 34 to 86 (FHIENHGSKVALRTHCGKYVSIGDHKQVYLSHHLHGDHSLFHLEHHHGKVSIK) is 2 X 13 AA approximate repeats. The disordered stretch occupies residues 99 to 118 (GHVSTSHHHDHHATFEEHIL).

This sequence belongs to the hisactophilin family. Homodimer or heterodimer of hatA and hatB, linked by a disulfide bond. Phosphorylated.

The protein localises to the cytoplasm. It localises to the cell membrane. In terms of biological role, may act as an intracellular pH sensor that links chemotactic signals to responses in the microfilament system of the cells by nucleating actin polymerization or stabilizing the filaments. The protein is Hisactophilin-2 (hatB) of Dictyostelium discoideum (Social amoeba).